A 466-amino-acid polypeptide reads, in one-letter code: ATP-dependent protease ATPase subunit HslU (466 aa).

ATP is bound by residues I18, 60 to 65 (GVGKTE), D279, E344, and R416.

Belongs to the ClpX chaperone family. HslU subfamily. A double ring-shaped homohexamer of HslV is capped on each side by a ring-shaped HslU homohexamer. The assembly of the HslU/HslV complex is dependent on binding of ATP.

Its subcellular location is the cytoplasm. Its function is as follows. ATPase subunit of a proteasome-like degradation complex; this subunit has chaperone activity. The binding of ATP and its subsequent hydrolysis by HslU are essential for unfolding of protein substrates subsequently hydrolyzed by HslV. HslU recognizes the N-terminal part of its protein substrates and unfolds these before they are guided to HslV for hydrolysis. This Syntrophomonas wolfei subsp. wolfei (strain DSM 2245B / Goettingen) protein is ATP-dependent protease ATPase subunit HslU.